A 166-amino-acid chain; its full sequence is Small ribosomal subunit protein uS5 (166 aa).

Residues 12–75 (YIEKLVQVNR…EAARRNMIQV (64 aa)) enclose the S5 DRBM domain.

It belongs to the universal ribosomal protein uS5 family. Part of the 30S ribosomal subunit. Contacts proteins S4 and S8.

In terms of biological role, with S4 and S12 plays an important role in translational accuracy. Its function is as follows. Located at the back of the 30S subunit body where it stabilizes the conformation of the head with respect to the body. The protein is Small ribosomal subunit protein uS5 of Pseudomonas aeruginosa (strain LESB58).